Consider the following 203-residue polypeptide: Small ribosomal subunit protein uS4 (203 aa).

Residues 92–152 (LRLATVLLRA…EKSRKLVPFI (61 aa)) form the S4 RNA-binding domain.

The protein belongs to the universal ribosomal protein uS4 family. In terms of assembly, part of the 30S ribosomal subunit. Contacts protein S5. The interaction surface between S4 and S5 is involved in control of translational fidelity.

One of the primary rRNA binding proteins, it binds directly to 16S rRNA where it nucleates assembly of the body of the 30S subunit. In terms of biological role, with S5 and S12 plays an important role in translational accuracy. The protein is Small ribosomal subunit protein uS4 of Thermobifida fusca (strain YX).